A 160-amino-acid polypeptide reads, in one-letter code: Transcriptional repressor NrdR (160 aa).

A zinc finger lies at Cys3–Cys34. Residues Pro49–Glu139 form the ATP-cone domain.

Belongs to the NrdR family. Zn(2+) serves as cofactor.

Functionally, negatively regulates transcription of bacterial ribonucleotide reductase nrd genes and operons by binding to NrdR-boxes. This chain is Transcriptional repressor NrdR, found in Bordetella bronchiseptica (strain ATCC BAA-588 / NCTC 13252 / RB50) (Alcaligenes bronchisepticus).